Here is a 218-residue protein sequence, read N- to C-terminus: Guanylate kinase (218 aa).

Residues 15–194 (GMMLVLSSPS…SIADVRAILR (180 aa)) form the Guanylate kinase-like domain. 22 to 29 (SPSGAGKT) is a binding site for ATP.

Belongs to the guanylate kinase family.

Its subcellular location is the cytoplasm. The enzyme catalyses GMP + ATP = GDP + ADP. Essential for recycling GMP and indirectly, cGMP. This Rhodospirillum rubrum (strain ATCC 11170 / ATH 1.1.1 / DSM 467 / LMG 4362 / NCIMB 8255 / S1) protein is Guanylate kinase.